Here is a 426-residue protein sequence, read N- to C-terminus: MHDIRLIRENAEAFDAALARRGVGPVAQSILSLDSRRREIATRMQEVQARRNEASKAIGAAMGKGDKDTAEALKAEVAALKVELPALEEEERQLTAQQNAALAAYPNTPAADVPEGADEADNVEVSRWGTPRDFAFAPKEHADLGPALGLDFETGALISGARFTFLKGQMARLHRALAQFMLDRQTGENGYMECIPPLLVKDEAVFGTGQLPKFAEDLFRTTDGRWLIPTAEVSLTNAVQGQILGEAQLPLRMTALTPCFRSEAGAAGRDTRGFIRQHQFEKVELVSITRPEDSESEHERMTQCAEGILQALGLPYRKVLLCTGDMGFTARKTYDLEVWLPGQGAYREISSCSNCGDFQARRMNARYRPEGAKGTEFVHTLNGSGLAVGRTLVAVLENYQQEDGSVAVPEVLLPYMGGLARLTPQG.

230 to 232 (TAE) contacts L-serine. 261–263 (RSE) is a binding site for ATP. Position 284 (glutamate 284) interacts with L-serine. 348–351 (EISS) serves as a coordination point for ATP. An L-serine-binding site is contributed by serine 384.

The protein belongs to the class-II aminoacyl-tRNA synthetase family. Type-1 seryl-tRNA synthetase subfamily. Homodimer. The tRNA molecule binds across the dimer.

The protein resides in the cytoplasm. The catalysed reaction is tRNA(Ser) + L-serine + ATP = L-seryl-tRNA(Ser) + AMP + diphosphate + H(+). The enzyme catalyses tRNA(Sec) + L-serine + ATP = L-seryl-tRNA(Sec) + AMP + diphosphate + H(+). It participates in aminoacyl-tRNA biosynthesis; selenocysteinyl-tRNA(Sec) biosynthesis; L-seryl-tRNA(Sec) from L-serine and tRNA(Sec): step 1/1. In terms of biological role, catalyzes the attachment of serine to tRNA(Ser). Is also able to aminoacylate tRNA(Sec) with serine, to form the misacylated tRNA L-seryl-tRNA(Sec), which will be further converted into selenocysteinyl-tRNA(Sec). The chain is Serine--tRNA ligase from Novosphingobium aromaticivorans (strain ATCC 700278 / DSM 12444 / CCUG 56034 / CIP 105152 / NBRC 16084 / F199).